A 178-amino-acid chain; its full sequence is uncharacterized protein (178 aa).

It belongs to the mimivirus L39/R874 family.

This is an uncharacterized protein from Acanthamoeba polyphaga (Amoeba).